The chain runs to 201 residues: Large ribosomal subunit protein uL4 (201 aa).

The tract at residues 45–71 (AQKTRAEVTGSGKKPWRQKGTGRARAG) is disordered.

The protein belongs to the universal ribosomal protein uL4 family. As to quaternary structure, part of the 50S ribosomal subunit.

Functionally, one of the primary rRNA binding proteins, this protein initially binds near the 5'-end of the 23S rRNA. It is important during the early stages of 50S assembly. It makes multiple contacts with different domains of the 23S rRNA in the assembled 50S subunit and ribosome. In terms of biological role, forms part of the polypeptide exit tunnel. This Shewanella loihica (strain ATCC BAA-1088 / PV-4) protein is Large ribosomal subunit protein uL4.